Consider the following 311-residue polypeptide: Ferrochelatase (311 aa).

Fe cation-binding residues include H179 and E260.

The protein belongs to the ferrochelatase family.

It localises to the cytoplasm. The enzyme catalyses heme b + 2 H(+) = protoporphyrin IX + Fe(2+). Its pathway is porphyrin-containing compound metabolism; protoheme biosynthesis; protoheme from protoporphyrin-IX: step 1/1. Catalyzes the ferrous insertion into protoporphyrin IX. The protein is Ferrochelatase of Helicobacter hepaticus (strain ATCC 51449 / 3B1).